Consider the following 366-residue polypeptide: UDP-N-acetylglucosamine--N-acetylmuramyl-(pentapeptide) pyrophosphoryl-undecaprenol N-acetylglucosamine transferase (366 aa).

UDP-N-acetyl-alpha-D-glucosamine contacts are provided by residues 10–12 (TGG), Asn-124, Arg-166, Ser-196, and Gln-297.

Belongs to the glycosyltransferase 28 family. MurG subfamily.

The protein localises to the cell membrane. It carries out the reaction di-trans,octa-cis-undecaprenyl diphospho-N-acetyl-alpha-D-muramoyl-L-alanyl-D-glutamyl-meso-2,6-diaminopimeloyl-D-alanyl-D-alanine + UDP-N-acetyl-alpha-D-glucosamine = di-trans,octa-cis-undecaprenyl diphospho-[N-acetyl-alpha-D-glucosaminyl-(1-&gt;4)]-N-acetyl-alpha-D-muramoyl-L-alanyl-D-glutamyl-meso-2,6-diaminopimeloyl-D-alanyl-D-alanine + UDP + H(+). The protein operates within cell wall biogenesis; peptidoglycan biosynthesis. In terms of biological role, cell wall formation. Catalyzes the transfer of a GlcNAc subunit on undecaprenyl-pyrophosphoryl-MurNAc-pentapeptide (lipid intermediate I) to form undecaprenyl-pyrophosphoryl-MurNAc-(pentapeptide)GlcNAc (lipid intermediate II). This chain is UDP-N-acetylglucosamine--N-acetylmuramyl-(pentapeptide) pyrophosphoryl-undecaprenol N-acetylglucosamine transferase, found in Alkaliphilus metalliredigens (strain QYMF).